We begin with the raw amino-acid sequence, 82 residues long: Putative defensin-like protein 191 (82 aa).

An N-terminal signal peptide occupies residues 1–28 (MAKSVNATGFITYMVIFLILTGISRVKA). 4 disulfides stabilise this stretch: Cys-33–Cys-79, Cys-46–Cys-65, Cys-51–Cys-74, and Cys-55–Cys-76.

It belongs to the DEFL family.

The protein localises to the secreted. This Arabidopsis thaliana (Mouse-ear cress) protein is Putative defensin-like protein 191.